Here is a 733-residue protein sequence, read N- to C-terminus: MNSDDNVEADASSNIIKDSPKIKEQENTSTVNESDVLATSTTASSGVKRKRLPNDLVGQLRDKIQENPNDISSWYALVEEYGSKGKHEELRETYEQMLRPFPYVPRVWVDYISSELAFNDFHAVELLFSRCLVKVLSVDLWTLYLSYIRRINPDGEGQSRSTITQAYEFVINTIGVDILSGPIWSEFVDFLRSGPANSTWEQQQKLDHVRRIYQRAITTPIHNIEKLWRDYDAFENSVNRATARKFVAEKSPVYMAARAAMRELSNLTEGLRVYDFTFERKYTKVERIAYSRWMNWIKWEQSDPLDLQHGTMLQNRIAYAFEQAMLYVPLCPQIWLDGFSYFLSISDEQRALQTIRRGMRYCPSNFVLHVRYAEHEEANNRTSEIRSTYESLIAALAREISQLDSKASSSSESSTDGNPQEKKLPEHLVKRKSRLVRQYSLAWCCLINAIRRTEGVKAARAIFTKARKAPYQSHEIYIASAMMEHHCSRDPVIASRIFELGMRHFGDVPAYVYKYLSYLIAINDETNARALFEKAIPRIAADEAKPIYQKWLDYESNYGDLNAAIALSQRMAVVYPQESTQAIFLSRYGLKDDAEEEERETKEAEKIRELSVRLNGGNGFPGHVHNNREDDEVSIASTSSKSNVEMEDTRLLPASLELANTQGASNPPTSALPTVPVPLPSIITEFLDELPAPQVITGPRIQPTKLIDHIIKSDIPFIRLRNANAHLKRARFN.

The tract at residues 1-45 (MNSDDNVEADASSNIIKDSPKIKEQENTSTVNESDVLATSTTASS) is disordered. Residues 27–45 (NTSTVNESDVLATSTTASS) show a composition bias toward polar residues. HAT repeat units follow at residues 85 to 117 (GKHEELRETYEQMLRPFPYVPRVWVDYISSELA), 119 to 150 (NDFHAVELLFSRCLVKVLSVDLWTLYLSYIRR), 158 to 193 (QSRSTITQAYEFVINTIGVDILSGPIWSEFVDFLRS), 204 to 237 (QKLDHVRRIYQRAITTPIHNIEKLWRDYDAFENS), 269 to 302 (EGLRVYDFTFERKYTKVERIAYSRWMNWIKWEQS), and 312 to 344 (MLQNRIAYAFEQAMLYVPLCPQIWLDGFSYFLS). Positions 404-414 (DSKASSSSESS) are enriched in low complexity. Residues 404–425 (DSKASSSSESSTDGNPQEKKLP) form a disordered region. The stretch at 523–557 (NDETNARALFEKAIPRIAADEAKPIYQKWLDYESN) is one HAT 7 repeat.

It localises to the nucleus. The protein localises to the cytoplasm. In terms of biological role, component of the cleavage factor IA (CFIA) complex, which is involved in the endonucleolytic cleavage during polyadenylation-dependent pre-mRNA 3'-end formation. This Schizosaccharomyces pombe (strain 972 / ATCC 24843) (Fission yeast) protein is mRNA 3'-end-processing protein rna14 (rna14).